The sequence spans 1051 residues: Carbamoyl phosphate synthase large chain (1051 aa).

Residues Met-1–Asp-399 are carboxyphosphate synthetic domain. Positions 127, 167, 173, 174, 206, 208, 213, 239, 240, 241, 282, and 296 each coordinate ATP. Residues Arg-131–Leu-325 enclose the ATP-grasp 1 domain. Residues Gln-282, Glu-296, and Asn-298 each contribute to the Mg(2+) site. The Mn(2+) site is built by Gln-282, Glu-296, and Asn-298. The interval Ile-400–Leu-548 is oligomerization domain. The tract at residues Glu-549–Asn-930 is carbamoyl phosphate synthetic domain. Residues Ser-673 to Phe-863 enclose the ATP-grasp 2 domain. Residues Arg-709, Lys-748, Ile-750, Glu-755, Gly-779, Val-780, His-781, Ser-782, Gln-822, and Glu-834 each coordinate ATP. Residues Gln-822, Glu-834, and Asn-836 each coordinate Mg(2+). Mn(2+) contacts are provided by Gln-822, Glu-834, and Asn-836. An MGS-like domain is found at Asn-930 to Ile-1051. Positions Arg-931–Ile-1051 are allosteric domain.

It belongs to the CarB family. In terms of assembly, composed of two chains; the small (or glutamine) chain promotes the hydrolysis of glutamine to ammonia, which is used by the large (or ammonia) chain to synthesize carbamoyl phosphate. Tetramer of heterodimers (alpha,beta)4. Mg(2+) is required as a cofactor. The cofactor is Mn(2+).

It catalyses the reaction hydrogencarbonate + L-glutamine + 2 ATP + H2O = carbamoyl phosphate + L-glutamate + 2 ADP + phosphate + 2 H(+). The catalysed reaction is hydrogencarbonate + NH4(+) + 2 ATP = carbamoyl phosphate + 2 ADP + phosphate + 2 H(+). It functions in the pathway amino-acid biosynthesis; L-arginine biosynthesis; carbamoyl phosphate from bicarbonate: step 1/1. The protein operates within pyrimidine metabolism; UMP biosynthesis via de novo pathway; (S)-dihydroorotate from bicarbonate: step 1/3. Its function is as follows. Large subunit of the glutamine-dependent carbamoyl phosphate synthetase (CPSase). CPSase catalyzes the formation of carbamoyl phosphate from the ammonia moiety of glutamine, carbonate, and phosphate donated by ATP, constituting the first step of 2 biosynthetic pathways, one leading to arginine and/or urea and the other to pyrimidine nucleotides. The large subunit (synthetase) binds the substrates ammonia (free or transferred from glutamine from the small subunit), hydrogencarbonate and ATP and carries out an ATP-coupled ligase reaction, activating hydrogencarbonate by forming carboxy phosphate which reacts with ammonia to form carbamoyl phosphate. The polypeptide is Carbamoyl phosphate synthase large chain (Saccharolobus islandicus (strain M.16.4 / Kamchatka #3) (Sulfolobus islandicus)).